Reading from the N-terminus, the 40-residue chain is Small polypeptide DEVIL 3 (40 aa).

The interval 9–40 is required for DVL/RTFL small polypeptide activity; that stretch reads PCNKKLGGYLKEQKGRLYIIRRCVVMLICWHD. Residues 12–28 traverse the membrane as a helical segment; that stretch reads KKLGGYLKEQKGRLYII.

This sequence belongs to the DVL/RTFL small polypeptides family. As to expression, mostly expressed in flowers and stems, and, to a lower extent, in roots and leaves.

It localises to the cell membrane. Functionally, small polypeptide acting as a regulatory molecule which coordinates cellular responses required for differentiation, growth and development, including leaves shape, pedicule elongation, inflorescence organization and fruit maturation, probably by restricting polar cell proliferation in lateral organs and coordinating socket cell recruitment and differentiation at trichome sites. The chain is Small polypeptide DEVIL 3 from Arabidopsis thaliana (Mouse-ear cress).